Consider the following 951-residue polypeptide: Protein translocase subunit SecA (951 aa).

Residues Gln-90, 108–112 (GEGKT), and Asp-509 contribute to the ATP site.

Belongs to the SecA family. Monomer and homodimer. Part of the essential Sec protein translocation apparatus which comprises SecA, SecYEG and auxiliary proteins SecDF. Other proteins may also be involved.

It is found in the cell inner membrane. The protein resides in the cellular thylakoid membrane. Its subcellular location is the cytoplasm. It catalyses the reaction ATP + H2O + cellular proteinSide 1 = ADP + phosphate + cellular proteinSide 2.. In terms of biological role, part of the Sec protein translocase complex. Interacts with the SecYEG preprotein conducting channel. Has a central role in coupling the hydrolysis of ATP to the transfer of proteins into and across the cell membrane, serving as an ATP-driven molecular motor driving the stepwise translocation of polypeptide chains across the membrane. Its function is as follows. Probably participates in protein translocation into and across both the cytoplasmic and thylakoid membranes in cyanobacterial cells. The chain is Protein translocase subunit SecA from Prochlorococcus marinus (strain MIT 9303).